Reading from the N-terminus, the 368-residue chain is Phosphate acyltransferase (368 aa).

Residues V335–A368 form a disordered region.

It belongs to the PlsX family. Homodimer. Probably interacts with PlsY.

It is found in the cytoplasm. It catalyses the reaction a fatty acyl-[ACP] + phosphate = an acyl phosphate + holo-[ACP]. Its pathway is lipid metabolism; phospholipid metabolism. Catalyzes the reversible formation of acyl-phosphate (acyl-PO(4)) from acyl-[acyl-carrier-protein] (acyl-ACP). This enzyme utilizes acyl-ACP as fatty acyl donor, but not acyl-CoA. This Burkholderia vietnamiensis (strain G4 / LMG 22486) (Burkholderia cepacia (strain R1808)) protein is Phosphate acyltransferase.